The chain runs to 158 residues: Small ribosomal subunit protein uS7 (158 aa).

It belongs to the universal ribosomal protein uS7 family. Part of the 30S ribosomal subunit. Contacts proteins S9 and S11.

One of the primary rRNA binding proteins, it binds directly to 16S rRNA where it nucleates assembly of the head domain of the 30S subunit. Is located at the subunit interface close to the decoding center, probably blocks exit of the E-site tRNA. In Porphyromonas gingivalis (strain ATCC BAA-308 / W83), this protein is Small ribosomal subunit protein uS7.